Reading from the N-terminus, the 295-residue chain is Cell shape-determining protein MreC (295 aa).

Residues 1–34 (MPQFFLNKRLIILLISIIVLVALVGFSLRDRENA) form the signal peptide. Residues 66–112 (VVDLKNTYTENQHLKERLEELAQLESEVADLKKENKDLKESLDITDS) are a coiled coil. A disordered region spans residues 276-295 (SAEAGTTDDDTTSSDTTGGQ).

It belongs to the MreC family. Homooligomer of 24 subunits, arranged as 12 dimers.

Functionally, involved in formation and maintenance of cell shape. The protein is Cell shape-determining protein MreC of Listeria monocytogenes serovar 1/2a (strain ATCC BAA-679 / EGD-e).